Reading from the N-terminus, the 485-residue chain is NADH-quinone oxidoreductase subunit N (485 aa).

Helical transmembrane passes span 8–28 (LIAL…MLSI), 35–55 (FLNA…LWFV), 71–91 (GFAM…CTFA), 105–125 (FYLL…ANHL), 127–147 (SLFL…GYAF), 159–179 (YTIL…LVYA), 203–223 (LLAG…LVPF), 235–255 (PAPV…GVVM), 271–291 (VVLA…ALSQ), 297–317 (LLGY…IALQ), 326–346 (VGVY…VVSL), 373–393 (AAVM…LGFI), 408–430 (WWLV…RVAV), and 455–475 (IVVL…QPLI).

The protein belongs to the complex I subunit 2 family. As to quaternary structure, NDH-1 is composed of 13 different subunits. Subunits NuoA, H, J, K, L, M, N constitute the membrane sector of the complex.

Its subcellular location is the cell inner membrane. It carries out the reaction a quinone + NADH + 5 H(+)(in) = a quinol + NAD(+) + 4 H(+)(out). Its function is as follows. NDH-1 shuttles electrons from NADH, via FMN and iron-sulfur (Fe-S) centers, to quinones in the respiratory chain. The immediate electron acceptor for the enzyme in this species is believed to be ubiquinone. Couples the redox reaction to proton translocation (for every two electrons transferred, four hydrogen ions are translocated across the cytoplasmic membrane), and thus conserves the redox energy in a proton gradient. This chain is NADH-quinone oxidoreductase subunit N, found in Escherichia coli (strain ATCC 8739 / DSM 1576 / NBRC 3972 / NCIMB 8545 / WDCM 00012 / Crooks).